The chain runs to 233 residues: Biosynthetic peptidoglycan transglycosylase (233 aa).

A helical membrane pass occupies residues Leu-8 to Ile-28.

It belongs to the glycosyltransferase 51 family.

The protein localises to the cell inner membrane. The enzyme catalyses [GlcNAc-(1-&gt;4)-Mur2Ac(oyl-L-Ala-gamma-D-Glu-L-Lys-D-Ala-D-Ala)](n)-di-trans,octa-cis-undecaprenyl diphosphate + beta-D-GlcNAc-(1-&gt;4)-Mur2Ac(oyl-L-Ala-gamma-D-Glu-L-Lys-D-Ala-D-Ala)-di-trans,octa-cis-undecaprenyl diphosphate = [GlcNAc-(1-&gt;4)-Mur2Ac(oyl-L-Ala-gamma-D-Glu-L-Lys-D-Ala-D-Ala)](n+1)-di-trans,octa-cis-undecaprenyl diphosphate + di-trans,octa-cis-undecaprenyl diphosphate + H(+). Its pathway is cell wall biogenesis; peptidoglycan biosynthesis. Its function is as follows. Peptidoglycan polymerase that catalyzes glycan chain elongation from lipid-linked precursors. The protein is Biosynthetic peptidoglycan transglycosylase of Neisseria meningitidis serogroup C / serotype 2a (strain ATCC 700532 / DSM 15464 / FAM18).